A 1342-amino-acid chain; its full sequence is DNA-directed RNA polymerase subunit beta (1342 aa).

It belongs to the RNA polymerase beta chain family. The RNAP catalytic core consists of 2 alpha, 1 beta, 1 beta' and 1 omega subunit. When a sigma factor is associated with the core the holoenzyme is formed, which can initiate transcription.

The catalysed reaction is RNA(n) + a ribonucleoside 5'-triphosphate = RNA(n+1) + diphosphate. DNA-dependent RNA polymerase catalyzes the transcription of DNA into RNA using the four ribonucleoside triphosphates as substrates. This chain is DNA-directed RNA polymerase subunit beta, found in Histophilus somni (strain 2336) (Haemophilus somnus).